The primary structure comprises 331 residues: GTP 3',8-cyclase (331 aa).

Residues 6–231 (PFGRTISYLR…TDIPFKTGGP (226 aa)) enclose the Radical SAM core domain. Arginine 15 serves as a coordination point for GTP. Cysteine 22 and cysteine 26 together coordinate [4Fe-4S] cluster. Tyrosine 28 contacts S-adenosyl-L-methionine. Position 29 (cysteine 29) interacts with [4Fe-4S] cluster. Arginine 64 is a binding site for GTP. Position 68 (glycine 68) interacts with S-adenosyl-L-methionine. Threonine 98 contributes to the GTP binding site. Serine 122 contributes to the S-adenosyl-L-methionine binding site. Lysine 158 provides a ligand contact to GTP. Methionine 192 is a binding site for S-adenosyl-L-methionine. Positions 255 and 258 each coordinate [4Fe-4S] cluster. Residue 260–262 (RVR) coordinates GTP. A [4Fe-4S] cluster-binding site is contributed by cysteine 272.

Belongs to the radical SAM superfamily. MoaA family. Monomer and homodimer. Requires [4Fe-4S] cluster as cofactor.

It catalyses the reaction GTP + AH2 + S-adenosyl-L-methionine = (8S)-3',8-cyclo-7,8-dihydroguanosine 5'-triphosphate + 5'-deoxyadenosine + L-methionine + A + H(+). Its pathway is cofactor biosynthesis; molybdopterin biosynthesis. Catalyzes the cyclization of GTP to (8S)-3',8-cyclo-7,8-dihydroguanosine 5'-triphosphate. The polypeptide is GTP 3',8-cyclase (Mesorhizobium japonicum (strain LMG 29417 / CECT 9101 / MAFF 303099) (Mesorhizobium loti (strain MAFF 303099))).